A 448-amino-acid polypeptide reads, in one-letter code: Adenylosuccinate synthetase (448 aa).

GTP-binding positions include 22-28 (GDEGKGK) and 50-52 (GHT). Residue aspartate 23 is the Proton acceptor of the active site. Mg(2+) contacts are provided by aspartate 23 and glycine 50. Residues 23 to 26 (DEGK), 48 to 51 (NAGH), threonine 139, arginine 153, glutamine 234, threonine 249, and arginine 321 each bind IMP. The active-site Proton donor is the histidine 51. 317–323 (SVTGRPR) is a binding site for substrate. Residues arginine 323, 349-351 (KLD), and 431-433 (STG) each bind GTP.

This sequence belongs to the adenylosuccinate synthetase family. As to quaternary structure, homodimer. The cofactor is Mg(2+).

Its subcellular location is the cytoplasm. The catalysed reaction is IMP + L-aspartate + GTP = N(6)-(1,2-dicarboxyethyl)-AMP + GDP + phosphate + 2 H(+). Its pathway is purine metabolism; AMP biosynthesis via de novo pathway; AMP from IMP: step 1/2. Functionally, plays an important role in the de novo pathway of purine nucleotide biosynthesis. Catalyzes the first committed step in the biosynthesis of AMP from IMP. In Paraburkholderia phymatum (strain DSM 17167 / CIP 108236 / LMG 21445 / STM815) (Burkholderia phymatum), this protein is Adenylosuccinate synthetase.